A 656-amino-acid chain; its full sequence is DNA ligase (656 aa).

Residues 32 to 36 (DAVYD) and 81 to 82 (SL) contribute to the NAD(+) site. K112 functions as the N6-AMP-lysine intermediate in the catalytic mechanism. The NAD(+) site is built by R133, E167, and K306. 4 residues coordinate Zn(2+): C400, C403, C416, and C421. Residues 577 to 656 (KSSSVFNNKT…ELLKRLKELD (80 aa)) enclose the BRCT domain.

It belongs to the NAD-dependent DNA ligase family. LigA subfamily. The cofactor is Mg(2+). Mn(2+) serves as cofactor.

The enzyme catalyses NAD(+) + (deoxyribonucleotide)n-3'-hydroxyl + 5'-phospho-(deoxyribonucleotide)m = (deoxyribonucleotide)n+m + AMP + beta-nicotinamide D-nucleotide.. In terms of biological role, DNA ligase that catalyzes the formation of phosphodiester linkages between 5'-phosphoryl and 3'-hydroxyl groups in double-stranded DNA using NAD as a coenzyme and as the energy source for the reaction. It is essential for DNA replication and repair of damaged DNA. The polypeptide is DNA ligase (Helicobacter pylori (strain P12)).